The following is a 174-amino-acid chain: Ubiquitin-fold modifier-conjugating enzyme 1 (174 aa).

C119 serves as the catalytic Glycyl thioester intermediate.

Belongs to the ubiquitin-conjugating enzyme family. UFC1 subfamily.

E2-like enzyme which forms an intermediate with UFM1 via a thioester linkage. This chain is Ubiquitin-fold modifier-conjugating enzyme 1, found in Arabidopsis thaliana (Mouse-ear cress).